We begin with the raw amino-acid sequence, 125 residues long: UPF0738 protein GK0828 (125 aa).

Belongs to the UPF0738 family.

This is UPF0738 protein GK0828 from Geobacillus kaustophilus (strain HTA426).